The sequence spans 188 residues: Putative manganese efflux pump MntP (188 aa).

Transmembrane regions (helical) follow at residues 3-23 (WLTILGISVALAMDAFAVALA), 39-59 (LGFHFGLFQALMPIGGWLLGM), 65-85 (ISAYDHWIAFGLLAYVGGRMV), 104-124 (GMTMVMLSVATSIDAFAVGLS), 125-145 (IAMLGVSVWLPATVIGLVAGV), and 167-187 (ICGGLVLCLIGLKILLEHTLL).

Belongs to the MntP (TC 9.B.29) family.

The protein localises to the cell inner membrane. Functionally, probably functions as a manganese efflux pump. The protein is Putative manganese efflux pump MntP of Citrifermentans bemidjiense (strain ATCC BAA-1014 / DSM 16622 / JCM 12645 / Bem) (Geobacter bemidjiensis).